Reading from the N-terminus, the 1103-residue chain is Centrosomal protein of 126 kDa (1103 aa).

Over residues 1–12 (MLAGRPGAQSAG) the composition is skewed to low complexity. Residues 1–36 (MLAGRPGAQSAGAGVGAGPPDAPGARDGGGRPRPGA) form a disordered region. Coiled-coil stretches lie at residues 43–116 (HLEK…FQRA) and 182–222 (QKHL…KLLE). Disordered regions lie at residues 380–409 (NTAESNVVRASDPTEGAVQRERPAQMESPT) and 723–812 (ESKA…PGQS). The segment covering 723 to 735 (ESKAPVHASDSKT) has biased composition (basic and acidic residues). Residues 736–748 (QKTKPQRGVKFTR) show a composition bias toward basic residues. Polar residues-rich tracts occupy residues 763-784 (RKPTVSQPQTSSKANTVAQTQG) and 798-812 (NIKSGKNMQVSPGQS).

Interacts with DCTN1.

Its subcellular location is the midbody. The protein localises to the cytoplasm. It localises to the cytoskeleton. It is found in the microtubule organizing center. The protein resides in the centrosome. Its subcellular location is the cilium basal body. Participate in cytokinesis. Necessary for microtubules and mitotic spindle organization. Involved in primary cilium formation. The protein is Centrosomal protein of 126 kDa of Mus musculus (Mouse).